A 54-amino-acid polypeptide reads, in one-letter code: MKKYTCTVCGYIYNPEDGDPDNGVNPGTDFKDIPDDWVCPLCGVGKDQFEEVEE.

Met1 bears the N-formylmethionine mark. The Rubredoxin-like domain maps to 1–54 (MKKYTCTVCGYIYNPEDGDPDNGVNPGTDFKDIPDDWVCPLCGVGKDQFEEVEE). Cys6, Cys9, Cys39, and Cys42 together coordinate Fe cation.

It belongs to the rubredoxin family. Requires Fe(3+) as cofactor.

Rubredoxin is a small nonheme, iron protein lacking acid-labile sulfide. Its single Fe, chelated to 4 Cys, functions as an electron acceptor and may also stabilize the conformation of the molecule. In Clostridium pasteurianum, this protein is Rubredoxin.